A 457-amino-acid chain; its full sequence is Phosphomethylpyrimidine synthase (457 aa).

Residues Asn-81, Met-110, Tyr-139, His-175, Ser-195–Gly-197, Asp-236–Arg-239, and Glu-275 contribute to the substrate site. His-279 lines the Zn(2+) pocket. A substrate-binding site is contributed by Tyr-302. His-343 contacts Zn(2+). Cys-423, Cys-426, and Cys-431 together coordinate [4Fe-4S] cluster.

Belongs to the ThiC family. The cofactor is [4Fe-4S] cluster.

It carries out the reaction 5-amino-1-(5-phospho-beta-D-ribosyl)imidazole + S-adenosyl-L-methionine = 4-amino-2-methyl-5-(phosphooxymethyl)pyrimidine + CO + 5'-deoxyadenosine + formate + L-methionine + 3 H(+). The protein operates within cofactor biosynthesis; thiamine diphosphate biosynthesis. Catalyzes the synthesis of the hydroxymethylpyrimidine phosphate (HMP-P) moiety of thiamine from aminoimidazole ribotide (AIR) in a radical S-adenosyl-L-methionine (SAM)-dependent reaction. This chain is Phosphomethylpyrimidine synthase, found in Aquifex aeolicus (strain VF5).